Here is a 715-residue protein sequence, read N- to C-terminus: Protein sneaky (715 aa).

The Cytoplasmic segment spans residues 1 to 32; sequence MLSLLTRPFLPIFCFLYGPQSEGSTRIQCLRR. The chain crosses the membrane as a helical span at residues 33–53; it reads FVTFLLGLVLGFLLWKLAALN. Topologically, residues 54-66 are extracellular; sequence FTLGRLFVNGATD. A helical membrane pass occupies residues 67–87; the sequence is LYVFIIFVLVTGTIFMLSLPV. The Cytoplasmic portion of the chain corresponds to 88-109; it reads RAVILLIFVALVGKSGRTYLRA. A helical membrane pass occupies residues 110–130; that stretch reads VAFAFIISGPIANLVENAGEV. The Extracellular portion of the chain corresponds to 131–373; the sequence is ARVFVCTTVL…FERQKRIFNK (243 aa). A helical membrane pass occupies residues 374–394; the sequence is VMGILQKILCLFMLRMVYVSI. At 395 to 457 the chain is on the cytoplasmic side; it reads NYYVKYLNDV…FSRTHHESTT (63 aa). Residues 458 to 478 form a helical membrane-spanning segment; the sequence is VCFNLLQFLLELVTAGLFILI. Topologically, residues 479 to 553 are extracellular; it reads DHLVVELLQI…NAHVLPKKMY (75 aa). Residues 554-574 form a helical membrane-spanning segment; the sequence is YQLILLYLIIIVLIYQSTTFL. Over 575–715 the chain is Cytoplasmic; that stretch reads RMRRVICSFF…VEVYTYRKEK (141 aa). The segment at 655–691 adopts an RING-type; degenerate zinc-finger fold; that stretch reads CMICRGLEDSTFTVCGNCGLPYCDDCAEDLNSVCFQC.

As to expression, specifically expressed in testis.

It localises to the cytoplasmic vesicle. Its subcellular location is the secretory vesicle. The protein resides in the acrosome membrane. The protein localises to the cytoplasm. It is found in the cytoplasmic vesicle membrane. Component of the sperm acrosome membrane. Required for breakdown of the sperm plasma membrane after sperm entry into the egg, which is an essential prerequisite for successful fertilization. The chain is Protein sneaky from Drosophila melanogaster (Fruit fly).